The primary structure comprises 528 residues: Probable serine/threonine-protein kinase DDB_G0282417 (528 aa).

A compositionally biased stretch (low complexity) spans 49-77 (NNNNNNNNNNNNNNNNNNNNNNNNNNKNN). The disordered stretch occupies residues 49 to 84 (NNNNNNNNNNNNNNNNNNNNNNNNNNKNNNDGDDAA). The region spanning 136-466 (QQNRVLIGEG…ESLINNHQYS (331 aa)) is the Protein kinase domain. ATP-binding positions include 142–150 (IGEGHYGKV) and lysine 166. Aspartate 266 (proton acceptor) is an active-site residue.

The protein belongs to the protein kinase superfamily. Ser/Thr protein kinase family.

The enzyme catalyses L-seryl-[protein] + ATP = O-phospho-L-seryl-[protein] + ADP + H(+). It carries out the reaction L-threonyl-[protein] + ATP = O-phospho-L-threonyl-[protein] + ADP + H(+). The sequence is that of Probable serine/threonine-protein kinase DDB_G0282417 from Dictyostelium discoideum (Social amoeba).